Here is a 324-residue protein sequence, read N- to C-terminus: Aldo-keto reductase family 1 member A1-A (324 aa).

NADP(+) contacts are provided by residues 10-19 (GQRMPTVGLG), Thr20, Trp21, and Asp44. Tyr49 functions as the Proton donor in the catalytic mechanism. Residues Ser161, Asn162, Ser210, Leu212, Ser214, Lys262, Ser263, Val264, Thr265, Arg268, Gln271, and Asn272 each contribute to the NADP(+) site.

This sequence belongs to the aldo/keto reductase family.

It localises to the cytoplasm. The protein localises to the cytosol. It is found in the apical cell membrane. It catalyses the reaction a primary alcohol + NADP(+) = an aldehyde + NADPH + H(+). It carries out the reaction S-nitroso-CoA + NADPH + H(+) = sulfinamide-CoA + NADP(+). The enzyme catalyses S-nitrosoglutathione + NADPH + H(+) = S-(hydroxysulfenamide)glutathione + NADP(+). Its function is as follows. Catalyzes the NADPH-dependent reduction of a wide variety of carbonyl-containing compounds to their corresponding alcohols. Displays enzymatic activity towards endogenous metabolites such as aromatic and aliphatic aldehydes, ketones, monosaccharides and bile acids. Acts as an aldehyde-detoxification enzyme. Also acts as an inhibitor of protein S-nitrosylation by mediating degradation of S-nitroso-coenzyme A (S-nitroso-CoA), a cofactor required to S-nitrosylate proteins. Also acts as a S-nitroso-glutathione reductase by catalyzing the NADPH-dependent reduction of S-nitrosoglutathione. Displays no reductase activity towards retinoids. This chain is Aldo-keto reductase family 1 member A1-A (akr1a1a), found in Danio rerio (Zebrafish).